The sequence spans 97 residues: UPF0235 protein HD_0778 (97 aa).

Belongs to the UPF0235 family.

This Haemophilus ducreyi (strain 35000HP / ATCC 700724) protein is UPF0235 protein HD_0778.